A 332-amino-acid polypeptide reads, in one-letter code: T-cell surface glycoprotein CD1b2 (332 aa).

The first 17 residues, 1-17, serve as a signal peptide directing secretion; sequence MLLLVLALLAVLFPAGD. The Extracellular segment spans residues 18–301; it reads TQDAFPEPIS…ILYWGNSSIG (284 aa). 3 N-linked (GlcNAc...) asparagine glycosylation sites follow: Asn38, Asn75, and Asn146. Disulfide bonds link Cys120-Cys184, Cys149-Cys163, and Cys224-Cys279. Residues 185-295 form the Ig-like domain; the sequence is PRYLMSVLEA…LGGQDIILYW (111 aa). Asn297 is a glycosylation site (N-linked (GlcNAc...) asparagine). A helical membrane pass occupies residues 302 to 322; it reads WIILAVFVSCLIVLLFYVLWF. Residues 323-332 lie on the Cytoplasmic side of the membrane; sequence YKHWSYQDIL. Residues 328–331 carry the Internalization signal motif; that stretch reads YQDI.

As to quaternary structure, heterodimer with B2M (beta-2-microglobulin). Interacts with saposin C.

The protein resides in the cell membrane. It localises to the endosome membrane. It is found in the lysosome membrane. Its function is as follows. Antigen-presenting protein that binds self and non-self lipid and glycolipid antigens and presents them to T-cell receptors on natural killer T-cells. The protein is T-cell surface glycoprotein CD1b2 (CD1B2) of Cavia porcellus (Guinea pig).